Here is a 507-residue protein sequence, read N- to C-terminus: 25-hydroxyvitamin D-1 alpha hydroxylase, mitochondrial (507 aa).

Cysteine 454 provides a ligand contact to heme.

It belongs to the cytochrome P450 family. Requires heme as cofactor. As to expression, kidney.

Its subcellular location is the mitochondrion membrane. It carries out the reaction calcidiol + 2 reduced [adrenodoxin] + O2 + 2 H(+) = calcitriol + 2 oxidized [adrenodoxin] + H2O. The catalysed reaction is secalciferol + 2 reduced [adrenodoxin] + O2 + 2 H(+) = calcitetrol + 2 oxidized [adrenodoxin] + H2O. The enzyme catalyses 25-hydroxy-24-oxocalciol + 2 reduced [adrenodoxin] + O2 + 2 H(+) = (1S)-1,25-dihydroxy-24-oxocalciol + 2 oxidized [adrenodoxin] + H2O. It catalyses the reaction 25-hydroxyvitamin D2 + 2 reduced [adrenodoxin] + O2 + 2 H(+) = 1alpha,25-dihydroxyvitamin D2 + 2 oxidized [adrenodoxin] + H2O. The protein operates within hormone biosynthesis; vitamin D biosynthesis. Its activity is regulated as follows. Activated by cardiolipin and dioleoyl phosphatidylethanolamine (DOPE), phospholipids found in the inner mitochondrial membrane. Inhibited by high substrate concentration. Functionally, a cytochrome P450 monooxygenase involved in vitamin D metabolism and in calcium and phosphorus homeostasis. Catalyzes the rate-limiting step in the activation of vitamin D in the kidney, namely the hydroxylation of 25-hydroxyvitamin D3/calcidiol at the C1-alpha position to form the hormonally active form of vitamin D3, 1alpha,25-dihydroxyvitamin D3/calcitriol that acts via the vitamin D receptor (VDR). Has 1-alpha-hydroxylase activity on vitamin D intermediates of the CYP24A1-mediated inactivation pathway. Converts 24R,25-dihydroxyvitamin D3/secalciferol to 1-alpha,24,25-trihydroxyvitamin D3, an active ligand of VDR. Also active on 25-hydroxyvitamin D2. Mechanistically, uses molecular oxygen inserting one oxygen atom into a substrate, and reducing the second into a water molecule, with two electrons provided by NADPH via FDXR/adrenodoxin reductase and FDX1/adrenodoxin. The polypeptide is 25-hydroxyvitamin D-1 alpha hydroxylase, mitochondrial (Cyp27b1) (Mus musculus (Mouse)).